A 117-amino-acid polypeptide reads, in one-letter code: Huntingtin-interacting protein M (117 aa).

Disordered regions lie at residues 1–30 and 71–117; these read MSEK…VPRS and EASN…RKND. Polar residues predominate over residues 72 to 81; sequence ASNNGSMRNT. Residues 82 to 117 show a composition bias toward basic and acidic residues; the sequence is SQDREREVDNNREPHSAESDVTRFLFDEMPKSRKND.

May interact with the N-terminus of HD.

The protein is Huntingtin-interacting protein M of Homo sapiens (Human).